The sequence spans 572 residues: SHUGOSHIN 1 (572 aa).

Residues 59-110 are a coiled coil; sequence KHQQQAILISSKENAENLQKENTKLMKVVMERDGIKSDLKKLRIEFQKVQEQ. Disordered stretches follow at residues 185–221, 244–285, 333–352, and 484–572; these read DADH…PANS, KLVS…QTET, ARLK…SIET, and SRRQ…RGGF. The segment covering 192–201 has biased composition (polar residues); the sequence is SGSSNANSLQ. Basic and acidic residues-rich tracts occupy residues 244–257, 336–352, 523–542, and 552–572; these read KLVS…ENHI, KSQE…SIET, ELKR…EMRK, and AAEK…RGGF.

The protein belongs to the shugoshin family.

Its function is as follows. Protects sister chromatid centromere cohesion in meiosis I but not through the protection of the cohesin SYN1. Required with SGO2 for full protection of centromeric cohesion during anaphase I. Required to prevent precocious release of pericentromeric cohesins during meiosis. Not necessary for the maintenance of the synaptonemal complex (SC). Not required for monopolar spindle orientation in meiosis I. This Arabidopsis thaliana (Mouse-ear cress) protein is SHUGOSHIN 1.